The sequence spans 309 residues: HPr kinase/phosphorylase (309 aa).

Catalysis depends on residues H138 and K159. 153–160 provides a ligand contact to ATP; the sequence is GDSGIGKS. S160 serves as a coordination point for Mg(2+). D177 (proton acceptor; for phosphorylation activity. Proton donor; for dephosphorylation activity) is an active-site residue. An important for the catalytic mechanism of both phosphorylation and dephosphorylation region spans residues 201 to 210; that stretch reads LEIRGVGIID. E202 contacts Mg(2+). The active site involves R243. Residues 264 to 269 form an important for the catalytic mechanism of dephosphorylation region; that stretch reads PVKTGR.

The protein belongs to the HPrK/P family. Homohexamer. It depends on Mg(2+) as a cofactor.

The catalysed reaction is [HPr protein]-L-serine + ATP = [HPr protein]-O-phospho-L-serine + ADP + H(+). It carries out the reaction [HPr protein]-O-phospho-L-serine + phosphate + H(+) = [HPr protein]-L-serine + diphosphate. Catalyzes the ATP- as well as the pyrophosphate-dependent phosphorylation of a specific serine residue in HPr, a phosphocarrier protein of the phosphoenolpyruvate-dependent sugar phosphotransferase system (PTS). HprK/P also catalyzes the pyrophosphate-producing, inorganic phosphate-dependent dephosphorylation (phosphorolysis) of seryl-phosphorylated HPr (P-Ser-HPr). The two antagonistic activities of HprK/P are regulated by several intracellular metabolites, which change their concentration in response to the absence or presence of rapidly metabolisable carbon sources (glucose, fructose, etc.) in the growth medium. Therefore, by controlling the phosphorylation state of HPr, HPrK/P is a sensor enzyme that plays a major role in the regulation of carbon metabolism and sugar transport: it mediates carbon catabolite repression (CCR), and regulates PTS-catalyzed carbohydrate uptake and inducer exclusion. This is HPr kinase/phosphorylase from Streptococcus thermophilus (strain CNRZ 1066).